The chain runs to 476 residues: UPF0481 protein At3g47200 (476 aa).

The segment at 1-24 (MADKTDIISSSSDKASPPPPSAFR) is disordered. 2 helical membrane-spanning segments follow: residues 133 to 153 (LMFMMVLDGCFILMVFLIMSG) and 439 to 459 (AVLFVILLTMLQSTVAILSYL).

It belongs to the UPF0481 family.

The protein resides in the membrane. The protein is UPF0481 protein At3g47200 of Arabidopsis thaliana (Mouse-ear cress).